The sequence spans 76 residues: Sec-independent protein translocase protein TatA (76 aa).

The helical transmembrane segment at 1–21 (MGGLSIWHWLIVLLIVALVFG) threads the bilayer. The interval 43–76 (MKDGDAPADAQQLPRSGTVDVNAKEATRSDSNKA) is disordered. A compositionally biased stretch (basic and acidic residues) spans 64–76 (NAKEATRSDSNKA).

The protein belongs to the TatA/E family. In terms of assembly, the Tat system comprises two distinct complexes: a TatABC complex, containing multiple copies of TatA, TatB and TatC subunits, and a separate TatA complex, containing only TatA subunits. Substrates initially bind to the TatABC complex, which probably triggers association of the separate TatA complex to form the active translocon.

It localises to the cell inner membrane. In terms of biological role, part of the twin-arginine translocation (Tat) system that transports large folded proteins containing a characteristic twin-arginine motif in their signal peptide across membranes. TatA could form the protein-conducting channel of the Tat system. The protein is Sec-independent protein translocase protein TatA of Burkholderia multivorans (strain ATCC 17616 / 249).